A 436-amino-acid chain; its full sequence is Ribosomal protein uS12 methylthiotransferase RimO (436 aa).

Residues 2–114 enclose the MTTase N-terminal domain; that stretch reads PNLYLVSLGC…IDEMILKKQN (113 aa). Residues cysteine 11, cysteine 45, cysteine 77, cysteine 146, cysteine 150, and cysteine 153 each coordinate [4Fe-4S] cluster. Residues 132–363 form the Radical SAM core domain; the sequence is TGSSYHAYIK…IKKQIEGSFK (232 aa). A TRAM domain is found at 363 to 434; that stretch reads KSLVGEVIKV…KDKLIGEIIC (72 aa).

It belongs to the methylthiotransferase family. RimO subfamily. [4Fe-4S] cluster is required as a cofactor.

It is found in the cytoplasm. The catalysed reaction is L-aspartate(89)-[ribosomal protein uS12]-hydrogen + (sulfur carrier)-SH + AH2 + 2 S-adenosyl-L-methionine = 3-methylsulfanyl-L-aspartate(89)-[ribosomal protein uS12]-hydrogen + (sulfur carrier)-H + 5'-deoxyadenosine + L-methionine + A + S-adenosyl-L-homocysteine + 2 H(+). Catalyzes the methylthiolation of an aspartic acid residue of ribosomal protein uS12. The chain is Ribosomal protein uS12 methylthiotransferase RimO from Campylobacter fetus subsp. fetus (strain 82-40).